Consider the following 341-residue polypeptide: Phosphoribosylformylglycinamidine cyclo-ligase (341 aa).

Belongs to the AIR synthase family.

The protein localises to the cytoplasm. It carries out the reaction 2-formamido-N(1)-(5-O-phospho-beta-D-ribosyl)acetamidine + ATP = 5-amino-1-(5-phospho-beta-D-ribosyl)imidazole + ADP + phosphate + H(+). The protein operates within purine metabolism; IMP biosynthesis via de novo pathway; 5-amino-1-(5-phospho-D-ribosyl)imidazole from N(2)-formyl-N(1)-(5-phospho-D-ribosyl)glycinamide: step 2/2. The sequence is that of Phosphoribosylformylglycinamidine cyclo-ligase from Lachnospira eligens (strain ATCC 27750 / DSM 3376 / VPI C15-48 / C15-B4) (Eubacterium eligens).